A 185-amino-acid polypeptide reads, in one-letter code: ATP synthase subunit b, cyanelle (185 aa).

The chain crosses the membrane as a helical span at residues L36–L58.

It belongs to the ATPase B chain family. F-type ATPases have 2 components, F(1) - the catalytic core - and F(0) - the membrane proton channel. F(1) has five subunits: alpha(3), beta(3), gamma(1), delta(1), epsilon(1). F(0) has four main subunits: a(1), b(1), b'(1) and c(10-14). The alpha and beta chains form an alternating ring which encloses part of the gamma chain. F(1) is attached to F(0) by a central stalk formed by the gamma and epsilon chains, while a peripheral stalk is formed by the delta, b and b' chains.

It is found in the plastid. It localises to the cyanelle thylakoid membrane. F(1)F(0) ATP synthase produces ATP from ADP in the presence of a proton or sodium gradient. F-type ATPases consist of two structural domains, F(1) containing the extramembraneous catalytic core and F(0) containing the membrane proton channel, linked together by a central stalk and a peripheral stalk. During catalysis, ATP synthesis in the catalytic domain of F(1) is coupled via a rotary mechanism of the central stalk subunits to proton translocation. Its function is as follows. Component of the F(0) channel, it forms part of the peripheral stalk, linking F(1) to F(0). This is ATP synthase subunit b, cyanelle from Cyanophora paradoxa.